A 219-amino-acid chain; its full sequence is Small ribosomal subunit protein uS2m (219 aa).

The protein belongs to the universal ribosomal protein uS2 family. Component of the mitochondrial ribosome small subunit.

It is found in the mitochondrion. This chain is Small ribosomal subunit protein uS2m (RPS2), found in Arabidopsis thaliana (Mouse-ear cress).